Here is a 423-residue protein sequence, read N- to C-terminus: Serine--tRNA ligase (423 aa).

Residue 230–232 (TSE) coordinates L-serine. Residue 261-263 (RSE) participates in ATP binding. Residue E284 coordinates L-serine. 348–351 (EISS) lines the ATP pocket. Residue S384 coordinates L-serine.

The protein belongs to the class-II aminoacyl-tRNA synthetase family. Type-1 seryl-tRNA synthetase subfamily. Homodimer. The tRNA molecule binds across the dimer.

It localises to the cytoplasm. The catalysed reaction is tRNA(Ser) + L-serine + ATP = L-seryl-tRNA(Ser) + AMP + diphosphate + H(+). The enzyme catalyses tRNA(Sec) + L-serine + ATP = L-seryl-tRNA(Sec) + AMP + diphosphate + H(+). Its pathway is aminoacyl-tRNA biosynthesis; selenocysteinyl-tRNA(Sec) biosynthesis; L-seryl-tRNA(Sec) from L-serine and tRNA(Sec): step 1/1. Catalyzes the attachment of serine to tRNA(Ser). Is also able to aminoacylate tRNA(Sec) with serine, to form the misacylated tRNA L-seryl-tRNA(Sec), which will be further converted into selenocysteinyl-tRNA(Sec). The protein is Serine--tRNA ligase of Macrococcus caseolyticus (strain JCSC5402) (Macrococcoides caseolyticum).